A 570-amino-acid chain; its full sequence is Sulfite reductase [NADPH] hemoprotein beta-component (570 aa).

[4Fe-4S] cluster is bound by residues Cys-434, Cys-440, Cys-479, and Cys-483. Cys-483 serves as a coordination point for siroheme.

Belongs to the nitrite and sulfite reductase 4Fe-4S domain family. In terms of assembly, alpha(8)-beta(8). The alpha component is a flavoprotein, the beta component is a hemoprotein. Siroheme is required as a cofactor. It depends on [4Fe-4S] cluster as a cofactor.

It catalyses the reaction hydrogen sulfide + 3 NADP(+) + 3 H2O = sulfite + 3 NADPH + 4 H(+). It participates in sulfur metabolism; hydrogen sulfide biosynthesis; hydrogen sulfide from sulfite (NADPH route): step 1/1. Functionally, component of the sulfite reductase complex that catalyzes the 6-electron reduction of sulfite to sulfide. This is one of several activities required for the biosynthesis of L-cysteine from sulfate. This chain is Sulfite reductase [NADPH] hemoprotein beta-component (cysI), found in Escherichia coli (strain K12).